The sequence spans 562 residues: Apyrase (562 aa).

The first 24 residues, Met1–Ala24, serve as a signal peptide directing secretion. Asp47, His49, and Asp98 together coordinate a divalent metal cation. The N-linked (GlcNAc...) asparagine glycan is linked to Asn112. A divalent metal cation is bound by residues Asn130, His233, and His257. AMP is bound at residue Arg370. N-linked (GlcNAc...) asparagine glycosylation is present at Asn390. AMP contacts are provided by Arg405, Phe424, and Asp514.

Belongs to the 5'-nucleotidase family. (Microbial infection) Interacts with Zika virus envelope protein E and Zika virus-like particles; the interaction does not affect Zika virus replication in human endothelial cells and keratinocytes. Requires a divalent metal cation as cofactor. In terms of processing, the N-terminus is blocked. In terms of tissue distribution, female saliva (at protein level). Female salivary gland (at protein level). Not detected or low-level expression in female carcasses without salivary glands. Not detected in male tissues.

The protein localises to the secreted. The catalysed reaction is a ribonucleoside 5'-triphosphate + 2 H2O = a ribonucleoside 5'-phosphate + 2 phosphate + 2 H(+). Functionally, facilitates hematophagy by preventing ADP-, collagen- and thrombin-dependent platelet aggregation in the host. Cleaves adenosine triphosphate (ATP) and adenosine diphosphate (ADP) to adenosine monophosphate (AMP) and inorganic phosphate. May reduce probing time by facilitating the speed of locating blood. In terms of biological role, (Microbial infection) Does not affect Zika virus replication in human endothelial cells and keratinocytes. This chain is Apyrase, found in Aedes aegypti (Yellowfever mosquito).